The chain runs to 61 residues: UPF0434 protein PSPPH_1629 (61 aa).

It belongs to the UPF0434 family.

The protein is UPF0434 protein PSPPH_1629 of Pseudomonas savastanoi pv. phaseolicola (strain 1448A / Race 6) (Pseudomonas syringae pv. phaseolicola (strain 1448A / Race 6)).